Here is a 62-residue protein sequence, read N- to C-terminus: Small ribosomal subunit protein bS21 (62 aa).

The segment at 43–62 (EKRKRKAMALQKQRKRRSRY) is disordered. A compositionally biased stretch (basic residues) spans 44-62 (KRKRKAMALQKQRKRRSRY).

Belongs to the bacterial ribosomal protein bS21 family.

The chain is Small ribosomal subunit protein bS21 from Trichodesmium erythraeum (strain IMS101).